Here is a 331-residue protein sequence, read N- to C-terminus: FMRFamide-related neuropeptides (331 aa).

The N-terminal stretch at methionine 1 to alanine 25 is a signal peptide. Positions phenylalanine 26–serine 65 are excised as a propeptide. Residues phenylalanine 71 and phenylalanine 83 each carry the phenylalanine amide modification. A propeptide spanning residues asparagine 86–aspartate 94 is cleaved from the precursor. Residue phenylalanine 100 is modified to Phenylalanine amide. Positions alanine 103–valine 168 are excised as a propeptide. The disordered stretch occupies residues glutamine 122–arginine 158. Over residues proline 146–arginine 158 the composition is skewed to basic and acidic residues. 2 positions are modified to phenylalanine amide: phenylalanine 174 and phenylalanine 181. Positions asparagine 184–glutamate 194 are excised as a propeptide. Phenylalanine amide is present on phenylalanine 200. Residues aspartate 203 to glutamate 205 constitute a propeptide that is removed on maturation. A Phenylalanine amide modification is found at phenylalanine 211. The propeptide occupies serine 214–aspartate 216. Position 222 is a phenylalanine amide (phenylalanine 222). The propeptide occupies asparagine 225–aspartate 236. Phenylalanine 242 is modified (phenylalanine amide). A propeptide spanning residues glycine 245–glutamate 254 is cleaved from the precursor. Phenylalanine 260 is subject to Phenylalanine amide. A propeptide spanning residues aspartate 263–glutamate 265 is cleaved from the precursor. Phenylalanine 271 carries the phenylalanine amide modification. The propeptide occupies serine 274–aspartate 277. Residues arginine 282 to phenylalanine 296 are compositionally biased toward basic and acidic residues. Residues arginine 282–threonine 310 form a disordered region. Phenylalanine 283 is modified (phenylalanine amide). Residues asparagine 286–aspartate 293 constitute a propeptide that is removed on maturation. Position 299 is a phenylalanine amide (phenylalanine 299). Positions glycine 302 to aspartate 312 are excised as a propeptide. Position 318 is a phenylalanine amide (phenylalanine 318). Positions serine 321–glycine 331 are excised as a propeptide.

Belongs to the FARP (FMRFamide related peptide) family.

The protein resides in the secreted. Functionally, excitatory neurotransmitters that directly modulate chromatophore function by activating chromatophore expansion at the chromatophore neuromuscular junction. The polypeptide is FMRFamide-related neuropeptides (Doryteuthis pealeii (Longfin inshore squid)).